We begin with the raw amino-acid sequence, 182 residues long: Large ribosomal subunit protein uL5 (182 aa).

Belongs to the universal ribosomal protein uL5 family. As to quaternary structure, part of the 50S ribosomal subunit; part of the 5S rRNA/L5/L18/L25 subcomplex. Contacts the 5S rRNA and the P site tRNA. Forms a bridge to the 30S subunit in the 70S ribosome.

Functionally, this is one of the proteins that bind and probably mediate the attachment of the 5S RNA into the large ribosomal subunit, where it forms part of the central protuberance. In the 70S ribosome it contacts protein S13 of the 30S subunit (bridge B1b), connecting the 2 subunits; this bridge is implicated in subunit movement. Contacts the P site tRNA; the 5S rRNA and some of its associated proteins might help stabilize positioning of ribosome-bound tRNAs. The polypeptide is Large ribosomal subunit protein uL5 (Mycoplasma mobile (strain ATCC 43663 / 163K / NCTC 11711) (Mesomycoplasma mobile)).